A 158-amino-acid chain; its full sequence is MLVLPEELREKLKKPFGKVYKTLPDIDGDIVTVGDIVTKTAIENNIIPKLSIFDLKTRRNIPVKINHVFKKVIKVKNPPGCISDEAIESIKYLSTINDRNIALLVDGEEDLLALIVIKYFPIGTYVLYGQPDEGIVVLKINKKLKQEIEEILKQFKKI.

GTP is bound by residues D35, I36, V37, D54, K56, E109, and D132.

Belongs to the GTP-dependent DPCK family.

The enzyme catalyses 3'-dephospho-CoA + GTP = GDP + CoA + H(+). Its pathway is cofactor biosynthesis; coenzyme A biosynthesis. Functionally, catalyzes the GTP-dependent phosphorylation of the 3'-hydroxyl group of dephosphocoenzyme A to form coenzyme A (CoA). This chain is GTP-dependent dephospho-CoA kinase, found in Methanocaldococcus jannaschii (strain ATCC 43067 / DSM 2661 / JAL-1 / JCM 10045 / NBRC 100440) (Methanococcus jannaschii).